A 134-amino-acid chain; its full sequence is Phosphoribosyl-AMP cyclohydrolase (134 aa).

Residue aspartate 80 participates in Mg(2+) binding. Position 81 (cysteine 81) interacts with Zn(2+). Mg(2+)-binding residues include aspartate 82 and aspartate 84. 2 residues coordinate Zn(2+): cysteine 98 and cysteine 105.

This sequence belongs to the PRA-CH family. In terms of assembly, homodimer. Mg(2+) serves as cofactor. It depends on Zn(2+) as a cofactor.

Its subcellular location is the cytoplasm. The catalysed reaction is 1-(5-phospho-beta-D-ribosyl)-5'-AMP + H2O = 1-(5-phospho-beta-D-ribosyl)-5-[(5-phospho-beta-D-ribosylamino)methylideneamino]imidazole-4-carboxamide. It functions in the pathway amino-acid biosynthesis; L-histidine biosynthesis; L-histidine from 5-phospho-alpha-D-ribose 1-diphosphate: step 3/9. Functionally, catalyzes the hydrolysis of the adenine ring of phosphoribosyl-AMP. The protein is Phosphoribosyl-AMP cyclohydrolase of Herminiimonas arsenicoxydans.